Here is a 193-residue protein sequence, read N- to C-terminus: E3 ubiquitin-protein ligase RMA2 (193 aa).

Residues 21-75 (CNICLDQVRDPVVTLCGHLFCWPCIHKWTYASNNSRQRVDQYDHKREPPKCPVCK) form an RING-type zinc finger. A helical; Anchor for type IV membrane protein transmembrane segment spans residues 175 to 192 (LSRVYLFLLCFMFMCLFL).

In terms of assembly, interacts with ERABP1. As to expression, barely detected in roots and limited to the root tips. Expressed in leaf hydathodes and in siliques.

The protein resides in the endoplasmic reticulum membrane. It carries out the reaction S-ubiquitinyl-[E2 ubiquitin-conjugating enzyme]-L-cysteine + [acceptor protein]-L-lysine = [E2 ubiquitin-conjugating enzyme]-L-cysteine + N(6)-ubiquitinyl-[acceptor protein]-L-lysine.. It functions in the pathway protein modification; protein ubiquitination. In terms of biological role, E3 ubiquitin-protein ligase that promotes the ubiquitination and proteasomal degradation of the auxin-binding protein ERABP1. In Arabidopsis thaliana (Mouse-ear cress), this protein is E3 ubiquitin-protein ligase RMA2 (RMA2).